The chain runs to 130 residues: Small ribosomal subunit protein uS11 (130 aa).

Belongs to the universal ribosomal protein uS11 family. In terms of assembly, part of the 30S ribosomal subunit. Interacts with proteins S7 and S18. Binds to IF-3.

Functionally, located on the platform of the 30S subunit, it bridges several disparate RNA helices of the 16S rRNA. Forms part of the Shine-Dalgarno cleft in the 70S ribosome. The sequence is that of Small ribosomal subunit protein uS11 from Gluconacetobacter diazotrophicus (strain ATCC 49037 / DSM 5601 / CCUG 37298 / CIP 103539 / LMG 7603 / PAl5).